We begin with the raw amino-acid sequence, 500 residues long: Protein psiE (500 aa).

A signal peptide spans 1–18 (MKLISVLITFLLATVIYS). An N-linked (GlcNAc...) asparagine glycan is attached at asparagine 59. The region spanning 114–256 (TYDTTRKIYV…KDYCGVCQGD (143 aa)) is the PA14 domain. N-linked (GlcNAc...) asparagine glycans are attached at residues asparagine 314, asparagine 341, asparagine 366, asparagine 420, and asparagine 469.

The protein belongs to the prespore-cell-inducing factor family.

The protein resides in the secreted. The protein is Protein psiE (psiE) of Dictyostelium discoideum (Social amoeba).